A 555-amino-acid chain; its full sequence is Dihydroxy-acid dehydratase (555 aa).

Asp78 lines the Mg(2+) pocket. Cys119 is a binding site for [2Fe-2S] cluster. Mg(2+) is bound by residues Asp120 and Lys121. Lys121 bears the N6-carboxylysine mark. Residue Cys191 coordinates [2Fe-2S] cluster. Glu444 is a Mg(2+) binding site. Ser470 acts as the Proton acceptor in catalysis.

It belongs to the IlvD/Edd family. In terms of assembly, homodimer. Requires [2Fe-2S] cluster as cofactor. The cofactor is Mg(2+).

It carries out the reaction (2R)-2,3-dihydroxy-3-methylbutanoate = 3-methyl-2-oxobutanoate + H2O. It catalyses the reaction (2R,3R)-2,3-dihydroxy-3-methylpentanoate = (S)-3-methyl-2-oxopentanoate + H2O. It participates in amino-acid biosynthesis; L-isoleucine biosynthesis; L-isoleucine from 2-oxobutanoate: step 3/4. Its pathway is amino-acid biosynthesis; L-valine biosynthesis; L-valine from pyruvate: step 3/4. Functions in the biosynthesis of branched-chain amino acids. Catalyzes the dehydration of (2R,3R)-2,3-dihydroxy-3-methylpentanoate (2,3-dihydroxy-3-methylvalerate) into 2-oxo-3-methylpentanoate (2-oxo-3-methylvalerate) and of (2R)-2,3-dihydroxy-3-methylbutanoate (2,3-dihydroxyisovalerate) into 2-oxo-3-methylbutanoate (2-oxoisovalerate), the penultimate precursor to L-isoleucine and L-valine, respectively. The polypeptide is Dihydroxy-acid dehydratase (Oleidesulfovibrio alaskensis (strain ATCC BAA-1058 / DSM 17464 / G20) (Desulfovibrio alaskensis)).